Consider the following 629-residue polypeptide: Probable indole-3-acetic acid-amido synthetase GH3.4 (629 aa).

It belongs to the IAA-amido conjugating enzyme family. Expressed in flowers.

In terms of biological role, may catalyze the synthesis of indole-3-acetic acid (IAA)-amino acid conjugates, providing a mechanism for the plant to cope with the presence of excess auxin. This is Probable indole-3-acetic acid-amido synthetase GH3.4 (GH3.4) from Oryza sativa subsp. japonica (Rice).